The sequence spans 76 residues: Protein A9 homolog (76 aa).

The signal sequence occupies residues 1–21 (MSCYSSILNSISTLAFLQVAS). The Intravirion segment spans residues 23 to 45 (VIELVRHCIMHFCETRIRCNTLA). The helical transmembrane segment at 46-66 (FVILKILITMVIYFMIGLGLF) threads the bilayer. At 67-76 (YLAKNGTEAE) the chain is on the virion surface side. Asn-71 carries an N-linked (GlcNAc...) asparagine; by host glycan.

It belongs to the chordopoxvirinae A9 family.

It is found in the virion membrane. The protein resides in the host cytoplasm. In terms of biological role, envelope protein. Required for an early step in virion morphogenesis. The protein is Protein A9 homolog of Fowlpox virus (strain NVSL) (FPV).